The following is a 343-amino-acid chain: Methylthioribose-1-phosphate isomerase (343 aa).

Substrate-binding positions include 48–50, R88, and Q193; that span reads RGA. D234 functions as the Proton donor in the catalytic mechanism. Substrate is bound at residue 244–245; that stretch reads NK.

This sequence belongs to the eIF-2B alpha/beta/delta subunits family. MtnA subfamily.

The catalysed reaction is 5-(methylsulfanyl)-alpha-D-ribose 1-phosphate = 5-(methylsulfanyl)-D-ribulose 1-phosphate. It functions in the pathway amino-acid biosynthesis; L-methionine biosynthesis via salvage pathway; L-methionine from S-methyl-5-thio-alpha-D-ribose 1-phosphate: step 1/6. Its function is as follows. Catalyzes the interconversion of methylthioribose-1-phosphate (MTR-1-P) into methylthioribulose-1-phosphate (MTRu-1-P). The sequence is that of Methylthioribose-1-phosphate isomerase from Thermotoga petrophila (strain ATCC BAA-488 / DSM 13995 / JCM 10881 / RKU-1).